Consider the following 226-residue polypeptide: Putative ABC transporter ATP-binding protein DR_2469 (226 aa).

Residues 2–225 (IELRHVSHHY…LRVYRERMTW (224 aa)) enclose the ABC transporter domain. 33-40 (GSNGSGKS) lines the ATP pocket.

Belongs to the ABC transporter superfamily.

The protein localises to the cell membrane. In terms of biological role, probably part of an ABC transporter complex. Responsible for energy coupling to the transport system. The sequence is that of Putative ABC transporter ATP-binding protein DR_2469 from Deinococcus radiodurans (strain ATCC 13939 / DSM 20539 / JCM 16871 / CCUG 27074 / LMG 4051 / NBRC 15346 / NCIMB 9279 / VKM B-1422 / R1).